A 189-amino-acid polypeptide reads, in one-letter code: Crossover junction endodeoxyribonuclease RuvC (189 aa).

Residues Asp-11, Glu-71, and Asp-143 contribute to the active site. The Mg(2+) site is built by Asp-11, Glu-71, and Asp-143.

It belongs to the RuvC family. As to quaternary structure, homodimer which binds Holliday junction (HJ) DNA. The HJ becomes 2-fold symmetrical on binding to RuvC with unstacked arms; it has a different conformation from HJ DNA in complex with RuvA. In the full resolvosome a probable DNA-RuvA(4)-RuvB(12)-RuvC(2) complex forms which resolves the HJ. Mg(2+) serves as cofactor.

The protein resides in the cytoplasm. The catalysed reaction is Endonucleolytic cleavage at a junction such as a reciprocal single-stranded crossover between two homologous DNA duplexes (Holliday junction).. Functionally, the RuvA-RuvB-RuvC complex processes Holliday junction (HJ) DNA during genetic recombination and DNA repair. Endonuclease that resolves HJ intermediates. Cleaves cruciform DNA by making single-stranded nicks across the HJ at symmetrical positions within the homologous arms, yielding a 5'-phosphate and a 3'-hydroxyl group; requires a central core of homology in the junction. The consensus cleavage sequence is 5'-(A/T)TT(C/G)-3'. Cleavage occurs on the 3'-side of the TT dinucleotide at the point of strand exchange. HJ branch migration catalyzed by RuvA-RuvB allows RuvC to scan DNA until it finds its consensus sequence, where it cleaves and resolves the cruciform DNA. In Methylorubrum extorquens (strain CM4 / NCIMB 13688) (Methylobacterium extorquens), this protein is Crossover junction endodeoxyribonuclease RuvC.